Reading from the N-terminus, the 212-residue chain is Nascent polypeptide-associated complex subunit alpha (212 aa).

2 disordered regions span residues 1-54 (MSNP…SRNE) and 123-177 (QLAA…EDKD). Acidic residues predominate over residues 22–38 (AEDEGSDSSDSEAEGEE). One can recognise an NAC-A/B domain in the interval 51-116 (SRNEKKARKS…AKIEDLNSQA (66 aa)). Over residues 128–157 (ESHDHAGHDHSGHDHSHDHGKGKAVDTEEK) the composition is skewed to basic and acidic residues. Acidic residues predominate over residues 158-169 (KEEEEDDTEEVD). A UBA domain is found at 173–212 (LEDKDIELVMTQASVSRNKAVKALKENDNDIVNSIMALSI).

Belongs to the NAC-alpha family. As to quaternary structure, part of the nascent polypeptide-associated complex (NAC), consisting of EGD2 and EGD1. NAC associates with ribosomes via EGD1.

The protein resides in the cytoplasm. It is found in the nucleus. Functionally, component of the nascent polypeptide-associated complex (NAC), a dynamic component of the ribosomal exit tunnel, protecting the emerging polypeptides from interaction with other cytoplasmic proteins to ensure appropriate nascent protein targeting. The NAC complex also promotes mitochondrial protein import by enhancing productive ribosome interactions with the outer mitochondrial membrane and blocks the inappropriate interaction of ribosomes translating non-secretory nascent polypeptides with translocation sites in the membrane of the endoplasmic reticulum. EGD2 may also be involved in transcription regulation. This is Nascent polypeptide-associated complex subunit alpha (egd2) from Botryotinia fuckeliana (strain B05.10) (Noble rot fungus).